A 698-amino-acid polypeptide reads, in one-letter code: Serotransferrin (698 aa).

An N-terminal signal peptide occupies residues 1–19 (MRFAVGALLACAALGLCLA). Transferrin-like domains follow at residues 25–347 (VKWC…NQRE) and 360–683 (VKWC…NIRK). 2 disulfides stabilise this stretch: Cys28–Cys67 and Cys38–Cys58. Arg42 carries the dimethylated arginine modification. 2 residues coordinate Fe(3+): Asp82 and Tyr114. Disulfide bonds link Cys137/Cys213, Cys156/Cys350, Cys177/Cys193, Cys180/Cys196, Cys190/Cys198, Cys246/Cys260, Cys363/Cys395, and Cys373/Cys386. Hydrogencarbonate-binding residues include Thr139, Arg143, Ala145, and Gly146. A Fe(3+)-binding site is contributed by Tyr207. His268 lines the Fe(3+) pocket. Residue Ser388 is modified to Phosphoserine. 2 residues coordinate Fe(3+): Asp410 and Tyr447. Disulfide bonds link Cys420/Cys693, Cys435/Cys656, Cys471/Cys542, Cys495/Cys684, Cys505/Cys519, Cys516/Cys525, Cys582/Cys596, and Cys634/Cys639. 4 residues coordinate hydrogencarbonate: Thr473, Arg477, Ala479, and Gly480. N-linked (GlcNAc...) asparagine glycosylation occurs at Asn512. A Fe(3+)-binding site is contributed by Tyr536. His604 is a Fe(3+) binding site. The residue at position 685 (Ser685) is a Phosphoserine.

Belongs to the transferrin family. Monomer. Part of a complex composed of SLC40A1/ferroportin, TF/transferrin and HEPH/hephaestin that transfers iron from cells to transferrin. In terms of tissue distribution, expressed by the liver and secreted in plasma.

Its subcellular location is the secreted. Functionally, transferrins are iron binding transport proteins which can bind two Fe(3+) ions in association with the binding of an anion, usually bicarbonate. It is responsible for the transport of iron from sites of absorption and heme degradation to those of storage and utilization. Serum transferrin may also have a further role in stimulating cell proliferation. This Rattus norvegicus (Rat) protein is Serotransferrin (Tf).